The sequence spans 42 residues: Large ribosomal subunit protein P2 (42 aa).

The protein belongs to the eukaryotic ribosomal protein P1/P2 family. P1 and P2 exist as dimers at the large ribosomal subunit. In terms of processing, phosphorylated.

Functionally, plays an important role in the elongation step of protein synthesis. This is Large ribosomal subunit protein P2 from Triticum aestivum (Wheat).